The chain runs to 128 residues: Large ribosomal subunit protein bL12 (128 aa).

This sequence belongs to the bacterial ribosomal protein bL12 family. Homodimer. Part of the ribosomal stalk of the 50S ribosomal subunit. Forms a multimeric L10(L12)X complex, where L10 forms an elongated spine to which 2 to 4 L12 dimers bind in a sequential fashion. Binds GTP-bound translation factors.

Forms part of the ribosomal stalk which helps the ribosome interact with GTP-bound translation factors. Is thus essential for accurate translation. In Methylobacillus flagellatus (strain ATCC 51484 / DSM 6875 / VKM B-1610 / KT), this protein is Large ribosomal subunit protein bL12.